The primary structure comprises 97 residues: UPF0250 protein HD_2015 (97 aa).

The protein belongs to the UPF0250 family.

This chain is UPF0250 protein HD_2015, found in Haemophilus ducreyi (strain 35000HP / ATCC 700724).